We begin with the raw amino-acid sequence, 429 residues long: Enolase (429 aa).

Residue Gln167 participates in (2R)-2-phosphoglycerate binding. Catalysis depends on Glu209, which acts as the Proton donor. 3 residues coordinate Mg(2+): Asp246, Glu289, and Asp316. Positions 341, 370, 371, and 392 each coordinate (2R)-2-phosphoglycerate. The active-site Proton acceptor is Lys341.

The protein belongs to the enolase family. As to quaternary structure, component of the RNA degradosome, a multiprotein complex involved in RNA processing and mRNA degradation. It depends on Mg(2+) as a cofactor.

The protein resides in the cytoplasm. It localises to the secreted. The protein localises to the cell surface. It catalyses the reaction (2R)-2-phosphoglycerate = phosphoenolpyruvate + H2O. Its pathway is carbohydrate degradation; glycolysis; pyruvate from D-glyceraldehyde 3-phosphate: step 4/5. Catalyzes the reversible conversion of 2-phosphoglycerate (2-PG) into phosphoenolpyruvate (PEP). It is essential for the degradation of carbohydrates via glycolysis. The chain is Enolase from Pseudomonas aeruginosa (strain LESB58).